The sequence spans 1476 residues: Cystic fibrosis transmembrane conductance regulator (1476 aa).

Over 1-77 (MQKSPLEKAS…QLIHALRRCF (77 aa)) the chain is Cytoplasmic. A helical transmembrane segment spans residues 78–98 (FWRFLFYGILLYLGEVTKAVQ). Residues 81–365 (FLFYGILLYL…TAVQIWYDSF (285 aa)) form the ABC transmembrane type-1 1 domain. The Extracellular segment spans residues 99–122 (PVLLGRIIASYDPENKVERSIAIY). The chain crosses the membrane as a helical span at residues 123–146 (LGIGLCLLFIVRTLLLHPAIFGLH). Residues 147–195 (RIGMQMRTAMFSLIYKKTLKLSSRVLDKISIGQLVSLLSNNLNKFDEGL) are Cytoplasmic-facing. The helical transmembrane segment at 196–216 (ALAHFIWIAPLQVTLLMGLLW) threads the bilayer. The Extracellular portion of the chain corresponds to 217–222 (DLLQFS). Residues 223 to 243 (AFCGLGLLIILVIFQAILGKM) form a helical membrane-spanning segment. Topologically, residues 244–298 (MVKYRDQRAAKINERLVITSEIIDNIYSVKAYCWESAMEKMIENLREVELKMTRK) are cytoplasmic. The helical transmembrane segment at 299–319 (AAYMRFFTSSAFFFSGFFVVF) threads the bilayer. At 320-339 (LSVLPYTVINGIVLRKIFTT) the chain is on the extracellular side. Residues 340-358 (ISFCIVLRMSVTRQFPTAV) form a helical membrane-spanning segment. The Cytoplasmic portion of the chain corresponds to 359-853 (QIWYDSFGMI…YLRYFTLHKG (495 aa)). ATP contacts are provided by residues Trp401, 458-465 (GSTGSGKT), and Gln493. The 224-residue stretch at 423-646 (SDENNVSFSH…RPDFSSKLMG (224 aa)) folds into the ABC transporter 1 domain. The S-palmitoyl cysteine moiety is linked to residue Cys524. 2 positions are modified to phosphoserine: Ser549 and Ser660. Residues 654 to 826 (TEERRSSILT…EEINEEDLKE (173 aa)) form a disordered R region region. Ser670 is subject to Phosphoserine; by PKA. Residues Ser684, Ser698, and Ser710 each carry the phosphoserine modification. Thr715 is modified (phosphothreonine). Ser732, Ser763, Ser785, Ser790, and Ser808 each carry phosphoserine. Residues 854–874 (LLLVLIWCVLVFLVEVAASLF) traverse the membrane as a helical segment. Residues 854–1153 (LLLVLIWCVL…SSIDTDSLMR (300 aa)) form the ABC transmembrane type-1 2 domain. Over 875–913 (VLWLLKNNPVNSGNNGTKISNSSYVVIITSTSFYYIFYI) the chain is Extracellular. N-linked (GlcNAc...) asparagine glycans are attached at residues Asn889 and Asn895. Residues 914 to 934 (YVGVADTLLALSLFRGLPLVH) form a discontinuously helical membrane-spanning segment. Residues 935–985 (TLITASKILHRKMLHSILHAPMSTISKLKAGGILNRFSKDIAILDDFLPLT) lie on the Cytoplasmic side of the membrane. A helical membrane pass occupies residues 986-1006 (IFDFIQLVFIVIGAIIVVSAL). Residues 1007-1008 (QP) lie on the Extracellular side of the membrane. Residues 1009–1029 (YIFLATVPGLVVFILLRAYFL) form a helical membrane-spanning segment. Over 1030–1090 (HTAQQLKQLE…TANWFMYLAT (61 aa)) the chain is Cytoplasmic. The helical transmembrane segment at 1091–1111 (LRWFQMRIDMIFVLFFIVVTF) threads the bilayer. Over 1112–1125 (ISILTTGEGEGTAG) the chain is Extracellular. The helical transmembrane segment at 1126-1146 (IILTLAMNIMSTLQWAVNSSI) threads the bilayer. The Cytoplasmic portion of the chain corresponds to 1147 to 1476 (DTDSLMRSVS…TEEEVQETRL (330 aa)). The 232-residue stretch at 1208-1439 (VKDLTVKYMD…KSIFQQAISS (232 aa)) folds into the ABC transporter 2 domain. Residues Tyr1215 and 1240–1247 (GRTGSGKS) each bind ATP. The interaction with GORASP2 stretch occupies residues 1382 to 1476 (RVLKQAFAGC…TEEEVQETRL (95 aa)). A lipid anchor (S-palmitoyl cysteine) is attached at Cys1391. 2 positions are modified to phosphoserine: Ser1440 and Ser1452. Positions 1446–1476 (FQGRHSSKHKPRTQITALKEETEEEVQETRL) are disordered. The span at 1466–1476 (ETEEEVQETRL) shows a compositional bias: acidic residues. Residues 1474 to 1476 (TRL) carry the PDZ-binding motif.

The protein belongs to the ABC transporter superfamily. ABCC family. CFTR transporter (TC 3.A.1.202) subfamily. Monomer; does not require oligomerization for channel activity. May form oligomers in the membrane. Interacts with SLC26A3, SLC26A6 and NHERF1. Interacts with SHANK2. Interacts with MYO6. Interacts (via C-terminus) with GOPC (via PDZ domain); this promotes CFTR internalization and thereby decreases channel activity. Interacts with SLC4A7 through NHERF1. Found in a complex with MYO5B and RAB11A. Interacts with ANO1. Interacts with SLC26A8. Interacts with AHCYL1; the interaction increases CFTR activity. Interacts with CSE1L. The core-glycosylated form interacts with GORASP2 (via PDZ GRASP-type 1 domain) in respone to ER stress. Interacts with MARCHF2; the interaction leads to CFTR ubiqtuitination and degradation. Interacts with ADGRG2. N-glycosylated. Post-translationally, phosphorylated; cAMP treatment promotes phosphorylation and activates the channel. Dephosphorylation decreases the ATPase activity (in vitro). Phosphorylation at PKA sites activates the channel. Phosphorylation at PKC sites enhances the response to phosphorylation by PKA. Phosphorylated by AMPK; this inhibits channel activity. In terms of processing, ubiquitinated, leading to its degradation in the lysosome. Deubiquitination by USP10 in early endosomes enhances its endocytic recycling to the cell membrane. Ubiquitinated by RNF185 during ER stress. Ubiquitinated by MARCHF2. In terms of tissue distribution, expressed in the epididymis (at protein level). In the initial segment of the epididymis, detected on both the luminal and basolateral sides of the ducts where it is expressed in the duct columnar cells as well as in the interstitial smooth muscle cells. Expressed in sperm in the caput. In the cauda, detected along the luminal border but not continuously and is also expressed on the basolateral surface. Within the caudal lumen, detected on sperm. Isoform 1: Expressed in a variety of epithelial tissues including colon, kidney, lung, small intestine, pancreatic duct and testis. Isoform 2: Expressed only in testis. Isoform 3: Expressed only in testis.

The protein resides in the apical cell membrane. It is found in the early endosome membrane. Its subcellular location is the cell membrane. The protein localises to the recycling endosome membrane. It localises to the endoplasmic reticulum membrane. The protein resides in the nucleus. The catalysed reaction is ATP + H2O + closed Cl(-) channel = ADP + phosphate + open Cl(-) channel.. It carries out the reaction chloride(in) = chloride(out). The enzyme catalyses hydrogencarbonate(in) = hydrogencarbonate(out). It catalyses the reaction ATP + H2O = ADP + phosphate + H(+). Functionally, epithelial ion channel that plays an important role in the regulation of epithelial ion and water transport and fluid homeostasis. Mediates the transport of chloride ions across the cell membrane. Possesses an intrinsic ATPase activity and utilizes ATP to gate its channel; the passive flow of anions through the channel is gated by cycles of ATP binding and hydrolysis by the ATP-binding domains. The ion channel is also permeable to HCO(3)(-); selectivity depends on the extracellular chloride concentration. Exerts its function also by modulating the activity of other ion channels and transporters. Contributes to the regulation of the pH and the ion content of the epithelial fluid layer. Modulates the activity of the epithelial sodium channel (ENaC) complex, in part by regulating the cell surface expression of the ENaC complex. May regulate bicarbonate secretion and salvage in epithelial cells by regulating the transporter SLC4A7. Can inhibit the chloride channel activity of ANO1. Plays a role in the chloride and bicarbonate homeostasis during sperm epididymal maturation and capacitation. In Mus musculus (Mouse), this protein is Cystic fibrosis transmembrane conductance regulator.